A 443-amino-acid polypeptide reads, in one-letter code: Threonine/serine transporter TdcC (443 aa).

Helical transmembrane passes span 22–42, 44–64, 97–117, 140–160, 163–183, 207–227, 259–279, 319–339, 366–386, 389–409, and 423–443; these read TTWTLGLFGTAIGAGVLFFPI, AGFGGLIPILLMLVLAYPIAF, GVVITFLYFFAICPLLWIYGV, FVALFLLLLMAFVIWFGKDLM, VMSYLVWPFIASLVLISLSLI, ILVTVWLGISIMVFSFNFSPI, ASMLMVAVVMFFAFSCLFTLS, ASIIALVAIFKSFFGHYLGTL, ISMIFIMGSTWVVAYANPNIL, IEAMGAPIIASLLCLLPMYAI, and DNVFVTLIGLLTILNIVYKLF.

Belongs to the amino acid/polyamine transporter 2 family. SdaC/TdcC subfamily.

It is found in the cell inner membrane. It carries out the reaction L-threonine(in) + H(+)(in) = L-threonine(out) + H(+)(out). The catalysed reaction is L-serine(in) + H(+)(in) = L-serine(out) + H(+)(out). Functionally, involved in the import of threonine and serine into the cell, with the concomitant import of a proton (symport system). In Salmonella newport (strain SL254), this protein is Threonine/serine transporter TdcC.